Consider the following 215-residue polypeptide: Histone-like protein 18C (215 aa).

Residues 140 to 215 (CTPRKENKCS…PKSSKPKCSM (76 aa)) are disordered. Composition is skewed to basic residues over residues 149–190 (SKPR…RPRK) and 197–215 (AKAK…KCSM).

In terms of biological role, not known. Encoded in the intron of cAMP-dependent protein kinase regulatory chain type I. This is Histone-like protein 18C (Mst77F) from Drosophila melanogaster (Fruit fly).